Reading from the N-terminus, the 714-residue chain is EtfAB:quinone oxidoreductase (714 aa).

Helical transmembrane passes span 25–45 (YEWL…FGFW), 87–107 (AGWM…AAGI), 125–145 (IGFS…VMVL), 164–184 (DGWI…IEGL), 207–227 (PFGW…MLMW), and 236–256 (MAIA…HIFA). 4Fe-4S ferredoxin-type domains lie at 293-324 (WKDL…LNPK) and 375-405 (YDVV…HIPK). [4Fe-4S] cluster-binding residues include Cys-302, Cys-305, Cys-308, Cys-312, Cys-386, Cys-389, Cys-392, and Cys-396.

As to quaternary structure, might constitute a membrane-associated complex with EtfA (Swol_0697), EtfB (Swol_0696), and the butyryl-CoA dehydrogenase Swol_1933 and/or Swol_2052. Requires [4Fe-4S] cluster as cofactor.

The protein localises to the cell membrane. It functions in the pathway lipid metabolism; butanoate metabolism. Functionally, oxidoreductase involved in syntrophic growth of S.wolfei with butyrate. Is presumed to link the electron flow from butyryl-CoA dehydrogenases to the membrane, in conjunction with the electron transfer flavoprotein EtfAB. May transfer electrons to the menaquinone pool of the membrane. This chain is EtfAB:quinone oxidoreductase, found in Syntrophomonas wolfei subsp. wolfei (strain DSM 2245B / Goettingen).